The primary structure comprises 448 residues: 5-hydroxytryptamine receptor 7 (448 aa).

The Extracellular portion of the chain corresponds to 1 to 86; that stretch reads MMDVNSSGRP…INYGRVEKVV (86 aa). N-linked (GlcNAc...) asparagine glycans are attached at residues Asn-5 and Asn-69. A helical transmembrane segment spans residues 87–111; it reads IGSILTLITLLTIAGNCLVVISVCF. Residues 112–121 lie on the Cytoplasmic side of the membrane; it reads VKKLRQPSNY. Residues 122-143 traverse the membrane as a helical segment; the sequence is LIVSLALADLSVAVAVMPFVSV. The Extracellular portion of the chain corresponds to 144-155; that stretch reads TDLIGGKWIFGH. The helical transmembrane segment at 156–181 threads the bilayer; sequence FFCNVFIAMDVMCCTASIMTLCVISI. The cysteines at positions 158 and 234 are disulfide-linked. Asp-165 contributes to the serotonin binding site. Residues 182 to 201 lie on the Cytoplasmic side of the membrane; the sequence is DRYLGITRPLTYPVRQNGKC. Residues 202-222 traverse the membrane as a helical segment; it reads MAKMILSVWLLSASITLPPLF. The Extracellular portion of the chain corresponds to 223 to 240; the sequence is GWAQNVNDDKVCLISQDF. Residues 241-263 form a helical membrane-spanning segment; that stretch reads GYTIYSTAVAFYIPMSVMLFMYY. Topologically, residues 264-329 are cytoplasmic; that stretch reads QIYKAARKSA…SIFKREQKAA (66 aa). A helical membrane pass occupies residues 330–355; that stretch reads TTLGIIVGAFTVCWLPFFLLSTARPF. The Extracellular portion of the chain corresponds to 356 to 366; that stretch reads ICGTSCSCIPL. The chain crosses the membrane as a helical span at residues 367–390; that stretch reads WVERTCLWLGYANSLINPFIYAFF. Residues 391–448 lie on the Cytoplasmic side of the membrane; the sequence is NRDLRTTYRSLLQCQYRNINRKLSAAGMHEALKLAERPERSEFVLQNSDHCGKKGHDT. Cys-404 carries S-palmitoyl cysteine lipidation.

The protein belongs to the G-protein coupled receptor 1 family. Thalamus, hypothalamus, and the hippocampal rudiments.

It localises to the cell membrane. In terms of biological role, G-protein coupled receptor for 5-hydroxytryptamine (serotonin), a biogenic hormone that functions as a neurotransmitter, a hormone and a mitogen. Ligand binding causes a conformation change that triggers signaling via guanine nucleotide-binding proteins (G proteins) and modulates the activity of downstream effectors. HTR7 is coupled to G(s) G alpha proteins and mediates activation of adenylate cyclase activity. The protein is 5-hydroxytryptamine receptor 7 of Rattus norvegicus (Rat).